A 325-amino-acid chain; its full sequence is Thioredoxin reductase (325 aa).

FAD contacts are provided by residues 10-13, 39-40, Gln44, Asn53, Val86, Cys143, Asp286, and 293-295; these read SGPS, IA, and RQA. Cys140 and Cys143 are disulfide-bonded.

It belongs to the class-II pyridine nucleotide-disulfide oxidoreductase family. Homodimer. FAD serves as cofactor.

It localises to the cytoplasm. The catalysed reaction is [thioredoxin]-dithiol + NADP(+) = [thioredoxin]-disulfide + NADPH + H(+). The sequence is that of Thioredoxin reductase (TRR1) from Pneumocystis carinii.